A 72-amino-acid chain; its full sequence is Translation initiation factor IF-1 (72 aa).

The 72-residue stretch at 1–72 (MAKEDTLEFP…SKGRINYRFK (72 aa)) folds into the S1-like domain.

Belongs to the IF-1 family. In terms of assembly, component of the 30S ribosomal translation pre-initiation complex which assembles on the 30S ribosome in the order IF-2 and IF-3, IF-1 and N-formylmethionyl-tRNA(fMet); mRNA recruitment can occur at any time during PIC assembly.

It localises to the cytoplasm. One of the essential components for the initiation of protein synthesis. Stabilizes the binding of IF-2 and IF-3 on the 30S subunit to which N-formylmethionyl-tRNA(fMet) subsequently binds. Helps modulate mRNA selection, yielding the 30S pre-initiation complex (PIC). Upon addition of the 50S ribosomal subunit IF-1, IF-2 and IF-3 are released leaving the mature 70S translation initiation complex. This is Translation initiation factor IF-1 from Cereibacter sphaeroides (strain ATCC 17029 / ATH 2.4.9) (Rhodobacter sphaeroides).